We begin with the raw amino-acid sequence, 411 residues long: MTEPITVPTPQQIIEPAVAGRTETMVLNMGPHHPSTHGVLRLVLELDGEVVVNVAPDVGYLHTGIEKTMESKTYQKAVVLTDRMDYLAPLSNNLCYALAVEKLLDVEIPERAQIARVLLTELQRISSHLVWLGTHALDLAAMSVFLYAFREREQILDIFELVSGARMMTSYFRIGGLAYDLPSDFIPTVEQFLAVMPSRIDEYEDLLTANPLWLERTVGVGVIDAQSAIALGLTGANLRATGVAYDVRKAMPYSGYETYSFEIPVGKNGDIYDRYRVRIAEMRQSVKIVQQATERLRELGPGPVVTSNRKVAPPPKREITESMESLIHHFKLWTEGFKPPRGDAYVSIESPRGILGCYVVSDGSPKPWRVHFRAPSFINLQSLAHMAKGRMVADLVALIASLDPVLGEVDR.

The protein belongs to the complex I 49 kDa subunit family. NDH-1 is composed of 14 different subunits. Subunits NuoB, C, D, E, F, and G constitute the peripheral sector of the complex.

The protein resides in the cell membrane. The enzyme catalyses a quinone + NADH + 5 H(+)(in) = a quinol + NAD(+) + 4 H(+)(out). Functionally, NDH-1 shuttles electrons from NADH, via FMN and iron-sulfur (Fe-S) centers, to quinones in the respiratory chain. The immediate electron acceptor for the enzyme in this species is believed to be ubiquinone. Couples the redox reaction to proton translocation (for every two electrons transferred, four hydrogen ions are translocated across the cytoplasmic membrane), and thus conserves the redox energy in a proton gradient. In Chloroflexus aurantiacus (strain ATCC 29366 / DSM 635 / J-10-fl), this protein is NADH-quinone oxidoreductase subunit D 2.